We begin with the raw amino-acid sequence, 185 residues long: Capsid protein (185 aa).

Residues 135-185 are disordered; sequence PNAPILSTLPETTVVRRRDRGRSPRRRTPSPRRRRSQSPRRRRSQSRESQC. The segment covering 149–178 has biased composition (basic residues); it reads VRRRDRGRSPRRRTPSPRRRRSQSPRRRRS. 3 positions are modified to phosphoserine; by host: Ser157, Ser164, and Ser172. A 1; half-length repeat occupies 157–163; it reads SPRRRTP. The interval 157–179 is 3 X 8 AA repeats of S-P-R-R-R-[PR]-S-Q; sequence SPRRRTPSPRRRRSQSPRRRRSQ. The Bipartite nuclear localization signal motif lies at 160-177; it reads RRTPSPRRRRSQSPRRRR. A run of 2 repeats spans residues 164-171 and 172-179. Residues 179–185 form an RNA binding region; the sequence is QSRESQC.

This sequence belongs to the orthohepadnavirus core antigen family. Homodimerizes, then multimerizes. Interacts with cytosol exposed regions of viral L glycoprotein present in the reticulum-to-Golgi compartment. Interacts with human FLNB. Phosphorylated form interacts with host importin alpha; this interaction depends on the exposure of the NLS, which itself depends upon genome maturation and/or phosphorylation of the capsid protein. Interacts with host NUP153. Post-translationally, phosphorylated by host SRPK1, SRPK2, and maybe protein kinase C or GAPDH. Phosphorylation is critical for pregenomic RNA packaging. Protein kinase C phosphorylation is stimulated by HBx protein and may play a role in transport of the viral genome to the nucleus at the late step during the viral replication cycle.

It is found in the virion. The protein localises to the host cytoplasm. Functionally, self assembles to form an icosahedral capsid. Most capsids appear to be large particles with an icosahedral symmetry of T=4 and consist of 240 copies of capsid protein, though a fraction forms smaller T=3 particles consisting of 180 capsid proteins. Entering capsids are transported along microtubules to the nucleus. Phosphorylation of the capsid is thought to induce exposure of nuclear localization signal in the C-terminal portion of the capsid protein that allows binding to the nuclear pore complex via the importin (karyopherin-) alpha and beta. Capsids are imported in intact form through the nuclear pore into the nuclear basket, where it probably binds NUP153. Only capsids that contain the mature viral genome can release the viral DNA and capsid protein into the nucleoplasm. Immature capsids get stuck in the basket. Capsids encapsulate the pre-genomic RNA and the P protein. Pre-genomic RNA is reverse-transcribed into DNA while the capsid is still in the cytoplasm. The capsid can then either be directed to the nucleus, providing more genomes for transcription, or bud through the endoplasmic reticulum to provide new virions. The chain is Capsid protein from Hepatitis B virus genotype A3 (isolate Cameroon/CMR711/1994) (HBV-A).